Consider the following 271-residue polypeptide: Murein DD-endopeptidase MepH (271 aa).

An N-terminal signal peptide occupies residues 1 to 27 (MARINRISITLCALLFTTLPLTPMAHA). Residues 27–102 (ASKQARESSA…KHAVNKTASA (76 aa)) are disordered. A compositionally biased stretch (basic residues) spans 55–64 (KTQKTAKKAA). Positions 65–86 (SKSTTKSKTASSVKKSSITASK) are enriched in low complexity. A NlpC/P60 domain is found at 138–265 (QKATKVAMNK…RHYVGARRVM (128 aa)). The active-site Nucleophile is Cys169. Residue His224 is the Proton acceptor of the active site. The active site involves Gln236.

Belongs to the peptidase C40 family.

Its pathway is cell wall biogenesis; cell wall polysaccharide biosynthesis. Its function is as follows. A murein DD-endopeptidase with specificity for D-Ala-meso-diaminopimelic acid (mDAP) cross-links. Its role is probably to cleave D-Ala-mDAP cross-links to allow insertion of new glycans and thus cell wall expansion. Functionally redundant with MepM and MepH. Partially suppresses an mepS disruption mutant. The sequence is that of Murein DD-endopeptidase MepH (mepH) from Escherichia coli (strain K12).